We begin with the raw amino-acid sequence, 156 residues long: Peptide methionine sulfoxide reductase MsrA (156 aa).

Residue Cys-10 is part of the active site.

It belongs to the MsrA Met sulfoxide reductase family.

The enzyme catalyses L-methionyl-[protein] + [thioredoxin]-disulfide + H2O = L-methionyl-(S)-S-oxide-[protein] + [thioredoxin]-dithiol. It carries out the reaction [thioredoxin]-disulfide + L-methionine + H2O = L-methionine (S)-S-oxide + [thioredoxin]-dithiol. Has an important function as a repair enzyme for proteins that have been inactivated by oxidation. Catalyzes the reversible oxidation-reduction of methionine sulfoxide in proteins to methionine. In Metamycoplasma arthritidis (strain 158L3-1) (Mycoplasma arthritidis), this protein is Peptide methionine sulfoxide reductase MsrA.